A 30-amino-acid chain; its full sequence is Acidic phospholipase A2 homolog cannitoxin gamma chain (30 aa).

In terms of assembly, heterotrimer of alpha, beta, and gamma chains; non-covalently linked. Post-translationally, glycosylated. As to expression, expressed by the venom gland.

It localises to the secreted. Functionally, heterotrimer: Snake venom phospholipase A2 (PLA2) heterotrimer that acts as a potent presynaptic neurotoxin by blocking synaptic transmission and synaptic vesicle recycling. Enzymatic activity is essential for the neurotoxic effects. May act by binding in a calcium-dependent fashion to neurotonal pentraxin-1 (NPTX1) and neurotonal pentraxin-2 (NPTX2), but not to neuronal pentraxin receptor (NPTXR). Also binds to taipoxin-associated calcium binding protein 49 (RCN2), a protein localized in the lumen of endoplasmic reticulum. Monomer (gamma chain): Snake venom phospholipase A2 homolog that is neither toxic nor enzymatically active. Does not bind calcium. This is Acidic phospholipase A2 homolog cannitoxin gamma chain from Oxyuranus scutellatus canni (Papuan taipan).